The primary structure comprises 423 residues: Imidazolonepropionase (423 aa).

Residues His78 and His80 each contribute to the Fe(3+) site. 2 residues coordinate Zn(2+): His78 and His80. Residues Arg87, Tyr150, and His183 each coordinate 4-imidazolone-5-propanoate. Tyr150 provides a ligand contact to N-formimidoyl-L-glutamate. His247 contacts Fe(3+). Residue His247 participates in Zn(2+) binding. Glu250 is a 4-imidazolone-5-propanoate binding site. Residue Asp322 coordinates Fe(3+). Asp322 is a binding site for Zn(2+). N-formimidoyl-L-glutamate is bound by residues Asn324 and Gly326. Residue Ser327 participates in 4-imidazolone-5-propanoate binding.

Belongs to the metallo-dependent hydrolases superfamily. HutI family. Zn(2+) is required as a cofactor. It depends on Fe(3+) as a cofactor.

The protein resides in the cytoplasm. It catalyses the reaction 4-imidazolone-5-propanoate + H2O = N-formimidoyl-L-glutamate. It participates in amino-acid degradation; L-histidine degradation into L-glutamate; N-formimidoyl-L-glutamate from L-histidine: step 3/3. Its function is as follows. Catalyzes the hydrolytic cleavage of the carbon-nitrogen bond in imidazolone-5-propanoate to yield N-formimidoyl-L-glutamate. It is the third step in the universal histidine degradation pathway. This chain is Imidazolonepropionase, found in Bacillus cereus (strain ATCC 10987 / NRS 248).